A 299-amino-acid chain; its full sequence is Putative transposase InsZ (299 aa).

Basic residues predominate over residues 276–291 (PSRPRSVKISKTRYPV). The disordered stretch occupies residues 276–299 (PSRPRSVKISKTRYPVKHSAAPLK).

This is Putative transposase InsZ (insZ) from Escherichia coli (strain K12).